Consider the following 350-residue polypeptide: Methionine import ATP-binding protein MetN (350 aa).

Residues 2-241 (IQIKNLKKEY…PQAPVTRSFV (240 aa)) enclose the ABC transporter domain. Residue 38–45 (GHSGAGKS) coordinates ATP.

This sequence belongs to the ABC transporter superfamily. Methionine importer (TC 3.A.1.24) family. The complex is composed of two ATP-binding proteins (MetN), two transmembrane proteins (MetI) and a solute-binding protein (MetQ).

It is found in the cell inner membrane. The enzyme catalyses L-methionine(out) + ATP + H2O = L-methionine(in) + ADP + phosphate + H(+). It catalyses the reaction D-methionine(out) + ATP + H2O = D-methionine(in) + ADP + phosphate + H(+). Functionally, part of the ABC transporter complex MetNIQ involved in methionine import. Responsible for energy coupling to the transport system. The polypeptide is Methionine import ATP-binding protein MetN (Francisella tularensis subsp. tularensis (strain FSC 198)).